Consider the following 75-residue polypeptide: Brevinin-2SN1 (75 aa).

The first 22 residues, 1-22 (MFTMKKPLLFLFFLGTISLSFC), serve as a signal peptide directing secretion. The propeptide at 23-40 (EEERGADEDDEVEMTEEE) is removed in mature form. A disulfide bridge links Cys69 with Cys75.

This sequence belongs to the frog skin active peptide (FSAP) family. Brevinin subfamily. As to expression, expressed by the skin glands.

The protein localises to the secreted. In terms of biological role, antimicrobial peptide. Active against some Gram-negative and a variety of Gram-positive bacterial strains. Active against fungus C.glabrata 090902 but not against C.albicans ATCC 10231. Shows hemolytic activity against human erythrocytes. This chain is Brevinin-2SN1, found in Sylvirana spinulosa (Fine-spined frog).